The sequence spans 333 residues: Ferrochelatase (333 aa).

His202 and Glu284 together coordinate Fe cation.

Belongs to the ferrochelatase family.

The protein resides in the cytoplasm. It catalyses the reaction heme b + 2 H(+) = protoporphyrin IX + Fe(2+). Its pathway is porphyrin-containing compound metabolism; protoheme biosynthesis; protoheme from protoporphyrin-IX: step 1/1. In terms of biological role, catalyzes the ferrous insertion into protoporphyrin IX. The protein is Ferrochelatase of Francisella tularensis subsp. holarctica (strain LVS).